The primary structure comprises 629 residues: Iron multicopper oxidase fer1 (629 aa).

Positions 1 to 29 (MVAPQRRTVMPALGLLASSLCSLLLTANA) are cleaved as a signal peptide. Plastocyanin-like domains are found at residues 44 to 164 (VNPD…IHPD) and 175 to 338 (DDYT…TISY). Residues Asn-58 and Asn-69 are each glycosylated (N-linked (GlcNAc...) asparagine). Positions 91 and 93 each coordinate Cu cation. The N-linked (GlcNAc...) asparagine glycan is linked to Asn-98. His-144 and His-146 together coordinate Cu cation. N-linked (GlcNAc...) asparagine glycans are attached at residues Asn-188, Asn-222, Asn-236, Asn-253, Asn-303, Asn-331, and Asn-398. In terms of domain architecture, Plastocyanin-like 3 spans 401 to 537 (YVAPQVPALF…LASIFIEAPD (137 aa)). Cu cation is bound by residues His-452, His-455, and His-457. The N-linked (GlcNAc...) asparagine glycan is linked to Asn-482. Positions 517, 518, 519, and 523 each coordinate Cu cation. A glycan (N-linked (GlcNAc...) asparagine) is linked at Asn-569. The chain crosses the membrane as a helical span at residues 592-612 (AIAAFTGCIITGLLGLATVVV).

The protein belongs to the multicopper oxidase family. It depends on Cu cation as a cofactor.

The protein localises to the cell membrane. In terms of biological role, iron transport multicopper oxidase, which is required for Fe(2+) high affinity uptake. May be required to oxidize Fe(2+) and release it from the transporter. Essential component of copper-dependent iron transport. The protein is Iron multicopper oxidase fer1 of Mycosarcoma maydis (Corn smut fungus).